Consider the following 1407-residue polypeptide: Clustered mitochondria protein (1407 aa).

Positions 1–12 are enriched in basic residues; the sequence is MAGKSNKSKAKR. Disordered regions lie at residues 1–36 and 83–103; these read MAGKSNKSKAKRAAQSTTTNSTTDVKSDAPAPPVAA and IPKADESESQVENNDAQPKQG. Positions 14-24 are enriched in polar residues; it reads AQSTTTNSTTD. The region spanning 384–670 is the Clu domain; the sequence is PDHKRDAARA…RVTPRDANYT (287 aa). The segment at 724 to 760 is disordered; that stretch reads IDGEANGASNSDQKSISDKQNTTAEDYAAGSSESSKS. Over residues 730–747 the composition is skewed to polar residues; that stretch reads GASNSDQKSISDKQNTTA. TPR repeat units follow at residues 1025–1058, 1067–1100, 1109–1142, 1151–1184, and 1193–1226; these read AKDLVEMGKVQLAEGMLSESYTFFSEAFSILQQV, ANCCRYLAMVLYHAGDMAGAIMQQHKELIINERC, AHSYGNMALFYHGLNQTELALQNMGRALLLLGLS, AATFINVAMMYQDMGKMDTALRYLQEALKKNERL, and AVCYHALAIAFNCMGAFKLSHQHEKKTYDILVKQ. The segment at 1358–1407 is disordered; the sequence is VSSEKGGENGEAKVQEKKESSENGKTENLAPAGLGAGLTSLDKKKQKAKK. The segment covering 1362–1382 has biased composition (basic and acidic residues); the sequence is KGGENGEAKVQEKKESSENGK.

This sequence belongs to the CLU family.

The protein localises to the cytoplasm. In terms of biological role, mRNA-binding protein involved in proper cytoplasmic distribution of mitochondria. Together with REC2, REC3 and FMT/CLU, contributes to the establishment of the cellular volume devoted to the chloroplast compartment. The sequence is that of Clustered mitochondria protein from Arabidopsis thaliana (Mouse-ear cress).